We begin with the raw amino-acid sequence, 475 residues long: Protein arginine N-methyltransferase 2 (475 aa).

The interval Glu167–Gly194 is disordered. Residues Leu169 to Gly194 show a composition bias toward acidic residues. The 229-residue stretch at Leu247 to Phe475 folds into the RMT2 domain. S-adenosyl-L-methionine is bound by residues Tyr254, Met285, Phe310 to Ile315, Glu331 to His333, Trp358 to Gln359, and Asp378.

This sequence belongs to the class I-like SAM-binding methyltransferase superfamily. RMT2 methyltransferase family. As to quaternary structure, monomer.

The protein resides in the cytoplasm. It localises to the nucleus. In terms of biological role, S-adenosyl-L-methionine-dependent protein-arginine N-methyltransferase that methylates the delta-nitrogen atom of arginine residues to form N5-methylarginine (type IV) in target proteins. Monomethylates ribosomal protein L12. The sequence is that of Protein arginine N-methyltransferase 2 from Yarrowia lipolytica (strain CLIB 122 / E 150) (Yeast).